Here is a 270-residue protein sequence, read N- to C-terminus: Phosphonates import ATP-binding protein PhnC 2 (270 aa).

The ABC transporter domain maps to 2 to 245 (LVVEGLTCRF…IARELYDLEA (244 aa)). 34–41 (GRSGAGKS) is a binding site for ATP.

The protein belongs to the ABC transporter superfamily. Phosphonates importer (TC 3.A.1.9.1) family. In terms of assembly, the complex is composed of two ATP-binding proteins (PhnC), two transmembrane proteins (PhnE) and a solute-binding protein (PhnD).

The protein resides in the cell inner membrane. The enzyme catalyses phosphonate(out) + ATP + H2O = phosphonate(in) + ADP + phosphate + H(+). Functionally, part of the ABC transporter complex PhnCDE involved in phosphonates import. Responsible for energy coupling to the transport system. The polypeptide is Phosphonates import ATP-binding protein PhnC 2 (Rhodopseudomonas palustris (strain BisA53)).